The primary structure comprises 123 residues: Alpha-lactalbumin B/C (123 aa).

The region spanning lysine 1–leucine 123 is the C-type lysozyme domain. 4 disulfides stabilise this stretch: cysteine 6–cysteine 120, cysteine 28–cysteine 111, cysteine 61–cysteine 77, and cysteine 73–cysteine 91. The Ca(2+) site is built by lysine 79, aspartate 82, aspartate 84, aspartate 87, and aspartate 88.

Belongs to the glycosyl hydrolase 22 family. Lactose synthase (LS) is a heterodimer of a catalytic component, beta1,4-galactosyltransferase (beta4Gal-T1) and a regulatory component, alpha-lactalbumin (LA). In terms of tissue distribution, mammary gland specific. Secreted in milk.

The protein localises to the secreted. Functionally, regulatory subunit of lactose synthase, changes the substrate specificity of galactosyltransferase in the mammary gland making glucose a good acceptor substrate for this enzyme. This enables LS to synthesize lactose, the major carbohydrate component of milk. In other tissues, galactosyltransferase transfers galactose onto the N-acetylglucosamine of the oligosaccharide chains in glycoproteins. This is Alpha-lactalbumin B/C from Equus caballus (Horse).